A 622-amino-acid polypeptide reads, in one-letter code: Fanconi anemia group G protein (622 aa).

A Phosphoserine modification is found at Ser-7. 4 TPR repeats span residues 246–279, 344–377, 453–486, and 514–547; these read VQVY…GSAW, SQTK…LLDS, SATH…LFRA, and AAAL…CPGN.

In terms of assembly, belongs to the multisubunit FA complex composed of FANCA, FANCB, FANCC, FANCE, FANCF, FANCG, FANCL/PHF9 and FANCM. The complex is not found in FA patients. In complex with FANCF, FANCA and FANCL, but not with FANCC, nor FANCE, interacts with HES1; this interaction may be essential for the stability and nuclear localization of FA core complex proteins. The complex with FANCC and FANCG may also include EIF2AK2 and HSP70. When phosphorylated at Ser-7, forms a complex with BRCA2, FANCD2 and XRCC3. As to expression, highly expressed in testis and thymus. Found in lymphoblasts.

It localises to the nucleus. The protein localises to the cytoplasm. Its function is as follows. DNA repair protein that may operate in a postreplication repair or a cell cycle checkpoint function. May be implicated in interstrand DNA cross-link repair and in the maintenance of normal chromosome stability. Candidate tumor suppressor gene. In Homo sapiens (Human), this protein is Fanconi anemia group G protein (FANCG).